The primary structure comprises 59 residues: Large ribosomal subunit protein bL32 (59 aa).

It belongs to the bacterial ribosomal protein bL32 family.

The protein is Large ribosomal subunit protein bL32 of Limosilactobacillus reuteri (strain DSM 20016) (Lactobacillus reuteri).